A 243-amino-acid polypeptide reads, in one-letter code: Orotidine 5'-phosphate decarboxylase (243 aa).

Substrate-binding positions include D19, K41, 69–78 (DLKFFDIPAT), T124, R185, Q194, G214, and R215. K71 serves as the catalytic Proton donor.

Belongs to the OMP decarboxylase family. Type 1 subfamily. Homodimer.

The enzyme catalyses orotidine 5'-phosphate + H(+) = UMP + CO2. Its pathway is pyrimidine metabolism; UMP biosynthesis via de novo pathway; UMP from orotate: step 2/2. Its function is as follows. Catalyzes the decarboxylation of orotidine 5'-monophosphate (OMP) to uridine 5'-monophosphate (UMP). The sequence is that of Orotidine 5'-phosphate decarboxylase from Xanthomonas euvesicatoria pv. vesicatoria (strain 85-10) (Xanthomonas campestris pv. vesicatoria).